Here is a 229-residue protein sequence, read N- to C-terminus: Ras-related protein Rab-21 (229 aa).

Position 23–30 (23–30 (GEGAVGKT)) interacts with GTP. The Effector region motif lies at 45–53 (HEQTLQASF). GTP-binding positions include 71–75 (DTAGQ) and 129–132 (NKID). Positions 179–229 (EANPPSSSTPPESQRGAPSSHPPSQPRQRSTLIVTDDSEQPSPKQGGGCCS) are disordered. 2 S-geranylgeranyl cysteine lipidation sites follow: C227 and C228.

The protein belongs to the small GTPase superfamily. Rab family.

It localises to the golgi apparatus membrane. This is Ras-related protein Rab-21 (RAB21) from Geodia cydonium (Sponge).